Reading from the N-terminus, the 313-residue chain is WD repeat-containing protein 82 (313 aa).

WD repeat units follow at residues 19-58 (ENSDKINCFDFSPNGETVISSSDDDSIVLYDCQEGKPKRT), 105-144 (GHSKRVVALSMSPVDDTFISGSLDKTIRLWDLRSPNCQGL), 146-184 (HLQGKPVCSFDPEGLIFAAGVNSEMVKLYDLRSFDKGPF), 192-231 (DRTCEWTGLKFSNDGKLILISTNGSFIRLIDAFKGVVMHT), 236-276 (ANSK…KVAV), and 280-313 (KHTGPITCLQFNPKFMTFASACSNMAFWLPTIDD).

Belongs to the WD repeat SWD2 family. In terms of assembly, component of the SET1/COMPASS complex, at least composed of the catalytic subunit (SETD1A or SETD1B), WDR5, WDR82, RBBP5, ASH2L/ASH2, CXXC1/CFP1, HCFC1 and DPY30. Component of the PNUTS-PP1 phosphatase complex, composed of PPP1R10/PNUTS, TOX4, WDR82, and PPP1CA or PPP1CB or PPP1CC. Associated with multiple protein complexes including an RNA polymerase II complex, MLL3/MLL4 complex and a chaperonin-containing TCP1 complex. Interacts with SETD1B (via N-terminal region); the interaction is direct. Interacts with SETD1A (via N-terminal region); the interaction is direct. Interacts with CUL4B. Interacts with RBBP5. Interacts with POLR2B. Interacts with hyperphosphorylated C-terminal domain (CTD) of RNA polymerase II large subunit (POLR2A). Binds specifically to CTD heptad repeats phosphorylated on 'Ser-5' of each heptad. SETD1A enhances its interaction with POLR2A. Interacts with PPP1R10/PNUTS. Interacts with PPP1CA in the presence of PPP1R10/PNUTS. Interacts with ZC3H4; interaction is independent of the SET1 complex and promotes transcription termination of long non-coding RNAs (lncRNAs).

It localises to the nucleus. The protein localises to the chromosome. Its subcellular location is the cytoplasm. Regulatory component of the SET1/COMPASS complex implicated in the tethering of this complex to transcriptional start sites of active genes. Facilitates histone H3 'Lys-4' methylation (H3K4me) via recruitment of the SETD1A or SETD1B to the 'Ser-5' phosphorylated C-terminal domain (CTD) of RNA polymerase II large subunit (POLR2A). Component of the PNUTS-PP1 protein phosphatase complex, a protein phosphatase 1 (PP1) complex that promotes RNA polymerase II transcription pause-release, allowing transcription elongation. PNUTS-PP1 also plays a role in the control of chromatin structure and cell cycle progression during the transition from mitosis into interphase. Together with ZC3H4, but independently of the SET1 complex, part of a transcription termination checkpoint that promotes transcription termination of long non-coding RNAs (lncRNAs). The transcription termination checkpoint is activated by the inefficiently spliced first exon of lncRNAs and promotes transcription termination of lncRNAs and their subsequent degradation by the exosome. The chain is WD repeat-containing protein 82 from Homo sapiens (Human).